Here is a 712-residue protein sequence, read N- to C-terminus: Auxin response factor 15 (712 aa).

Positions 142–244 form a DNA-binding region, TF-B3; that stretch reads FCKTLTASDT…ELRLGVRRAA (103 aa).

This sequence belongs to the ARF family. In terms of assembly, homo and heterodimers. Expressed in roots, culms, leaves and young panicles.

It localises to the nucleus. Functionally, auxin response factors (ARFs) are transcriptional factors that bind specifically to the DNA sequence 5'-TGTCTC-3' found in the auxin-responsive promoter elements (AuxREs). This is Auxin response factor 15 (ARF15) from Oryza sativa subsp. japonica (Rice).